The following is a 613-amino-acid chain: Probable potassium transport system protein Kup (613 aa).

11 helical membrane-spanning segments follow: residues 38–58 (VLGVLSLLIWALLLIVTLKYL), 91–111 (WILVSLGLFGAALLYGDGMIT), 128–148 (PSFGPLVIPVTIAILAGLFLF), 159–179 (FFGPIILLWFTSIGLCGLVEI), 206–226 (FLVLGAVFLAVTGAEALYADM), 238–258 (WSLLVLPALLLNYFGQGAVLL), 270–290 (ALVPSWGIIPMVILATLATII), 328–348 (IYVPAANWALMFSTIALVAGF), 357–377 (AYGVAVTATMLISAVLFYYVA), 387–407 (GLNLLMGMFMLIDLSFFGASV), and 410–430 (LFHGAWFPLVIGFALFTLMLT).

This sequence belongs to the HAK/KUP transporter (TC 2.A.72) family.

Its subcellular location is the cell inner membrane. It catalyses the reaction K(+)(in) + H(+)(in) = K(+)(out) + H(+)(out). In terms of biological role, transport of potassium into the cell. Likely operates as a K(+):H(+) symporter. This Chlorobaculum tepidum (strain ATCC 49652 / DSM 12025 / NBRC 103806 / TLS) (Chlorobium tepidum) protein is Probable potassium transport system protein Kup.